A 128-amino-acid polypeptide reads, in one-letter code: Large ribosomal subunit protein bL19 (128 aa).

The protein belongs to the bacterial ribosomal protein bL19 family.

This protein is located at the 30S-50S ribosomal subunit interface and may play a role in the structure and function of the aminoacyl-tRNA binding site. The polypeptide is Large ribosomal subunit protein bL19 (Paraburkholderia xenovorans (strain LB400)).